Consider the following 210-residue polypeptide: Ribonuclease HII (210 aa).

Residues 17–206 form the RNase H type-2 domain; that stretch reads DIICGVDEAG…VRALLGGVTP (190 aa). Residues Asp23, Glu24, and Asp115 each contribute to the a divalent metal cation site.

Belongs to the RNase HII family. The cofactor is Mn(2+). Mg(2+) serves as cofactor.

It is found in the cytoplasm. The catalysed reaction is Endonucleolytic cleavage to 5'-phosphomonoester.. Endonuclease that specifically degrades the RNA of RNA-DNA hybrids. This Janthinobacterium sp. (strain Marseille) (Minibacterium massiliensis) protein is Ribonuclease HII.